An 807-amino-acid polypeptide reads, in one-letter code: Mechanosensitive cation channel TMEM63A (807 aa).

The Extracellular segment spans residues 1-51; it reads MTDSPFLELWQSRAVSVREQLGLGDRPNDSYCYNSAKNSTVLQGVTFGGIP. The N-linked (GlcNAc...) asparagine glycan is linked to asparagine 38. Residues 52-74 traverse the membrane as a helical segment; sequence TVLLIDVSCFLFLILVFSIIRRR. At 75–134 the chain is on the cytoplasmic side; it reads FWDYGRIALVSEADSEPRFQRLSSTSSSGQQDFENELGCCPWLTAIFRLHDDQILEWCGE. A helical membrane pass occupies residues 135–167; the sequence is DAIHYLSFQRHIIFLLVVVSFLSLCVILPVNLS. Topologically, residues 168 to 191 are extracellular; it reads GDLLDKDPYSFGRTTIANLQTDND. A helical transmembrane segment spans residues 192–217; it reads LLWLHTIFAVIYLFLTVGFMRHHTQS. The Cytoplasmic portion of the chain corresponds to 218-416; the sequence is IKYKEENLVR…CWKNLSIQGL (199 aa). The segment at 219–414 is intracellular linker IL2; confers mechanosensitivity; that stretch reads KYKEENLVRR…DICWKNLSIQ (196 aa). The chain crosses the membrane as a helical span at residues 417–444; sequence RWWLQWLGINFTLFLGLFFLTTPSIILS. Topologically, residues 445 to 462 are extracellular; the sequence is TMDKFNVTKPIHALNNPI. Asparagine 450 carries an N-linked (GlcNAc...) asparagine glycan. Residues 463 to 490 traverse the membrane as a helical segment; it reads ISQFFPTLLLWSFSALLPSIVYYSTLLE. At 491 to 495 the chain is on the cytoplasmic side; it reads SHWTK. The chain crosses the membrane as a helical span at residues 496-532; that stretch reads SGENQIMMTKVYIFLIFMVLILPSLGLTSLDFFFRWL. Over 533–554 the chain is Extracellular; that stretch reads FDKTSSEASIRLECVFLPDQGA. Residues 555-586 traverse the membrane as a helical segment; it reads FFVNYVIASAFIGNGMELLRLPGLILYTFRMI. The tract at residues 555 to 586 is gating helix; it reads FFVNYVIASAFIGNGMELLRLPGLILYTFRMI. The Cytoplasmic segment spans residues 587 to 606; it reads MAKTAADRRNVKQNQAFQYE. The chain crosses the membrane as a helical span at residues 607–624; sequence FGAMYAWMLCVFTVIMAY. At 625–628 the chain is on the extracellular side; sequence SITC. A helical transmembrane segment spans residues 629–651; that stretch reads PIIAPFGLIYILLKHMVDRHNLY. Over 652–661 the chain is Cytoplasmic; it reads FIYLPAKLEK. The helical transmembrane segment at 662-689 threads the bilayer; that stretch reads GIHFAAVNQALAAPILCLFWLYFFSFLR. At 690-694 the chain is on the extracellular side; sequence LGMKA. Residues 695-709 form a helical membrane-spanning segment; sequence PATLFTFLVVLLTIL. The Cytoplasmic portion of the chain corresponds to 710–807; sequence VCLAHTCFGY…GSVAAAPQEA (98 aa). Serine 739 carries the post-translational modification Phosphoserine.

The protein belongs to the CSC1 (TC 1.A.17) family. As to quaternary structure, monomer. Post-translationally, N-Glycosylated.

The protein resides in the lysosome membrane. Its subcellular location is the early endosome membrane. It localises to the cell membrane. It carries out the reaction Ca(2+)(in) = Ca(2+)(out). Mechanosensitive cation channel with low conductance and high activation threshold. In contrast to TMEM63B, does not show phospholipid scramblase activity. Acts as a regulator of lysosomal morphology by mediating lysosomal mechanosensitivity. Important for the baby's first breath and respiration throughout life. Upon lung inflation conducts cation currents in alveolar type 1 and 2 cells triggering lamellar body exocytosis and surfactant secretion into airspace. Also acts as an osmosensitive cation channel preferentially activated by hypotonic stress. This Pongo abelii (Sumatran orangutan) protein is Mechanosensitive cation channel TMEM63A (TMEM63A).